The chain runs to 266 residues: Undecaprenyl-diphosphatase (266 aa).

8 consecutive transmembrane segments (helical) span residues 1–21, 39–59, 87–107, 111–131, 150–172, 187–207, 218–238, and 244–264; these read MTLTEIIILAIIQGITEFLPI, QGLAFDVAVHVGSLLAVMIYF, WWVIIATIPALIFGFAGKAFI, ARSALVIACTTIGFGLLLWYA, LIVGMAQALALIPGTSRSGITMT, FSFLLSIPVILGAGLLATLDL, ALIVGAVLSFVSAYACIYLFL, and IGMLPFVIYRMLLGVILLLFV.

It belongs to the UppP family.

It localises to the cell inner membrane. It carries out the reaction di-trans,octa-cis-undecaprenyl diphosphate + H2O = di-trans,octa-cis-undecaprenyl phosphate + phosphate + H(+). Functionally, catalyzes the dephosphorylation of undecaprenyl diphosphate (UPP). Confers resistance to bacitracin. The sequence is that of Undecaprenyl-diphosphatase from Pseudoalteromonas atlantica (strain T6c / ATCC BAA-1087).